The chain runs to 709 residues: MFANPVVKSFQYGNHTVTLETGVIARQATAAVMASMDDTSVFVSVVAKKEAVPGQDFFPLTVNYQERTYAAGKIPGGFFKREGRPSEAETLTARLIDRPIRPLFPDAFKNEVQVIATVVSINPEVNPDMITMIGTSAALAIAGIPFNGPIGAARVGHINGELVLNPSNTELENSKLDLVVSGTEGAVLMVESEADNLTEEEMLSAVVFGHEQQQVVINAINEFAAEVATPAWDWVAPEENTVLNARIAELAEAKLVEAYQITEKMTRYDRIHEIAAEVNEVLVSENEDVNLKEVHTIFHDLEKTVVRRSIIAGNPRIDGREKDMVRALDVRTGVLPRTHGSSLFTRGETQALVTATLGTQRDAQIIDSLMGEKKDHFLLHYNFPPYCVGETGFVGSPKRREIGHGKLAKRGIQAVMPSIEEFPYTVRVVSEITESNGSSSMASVCGTSLALMDAGVPIKASVAGIAMGLVKEGDDFVVLSDILGDEDHLGDMDFKVAGTNEGITALQMDIKIEGITKEIMQIALNQAQGARKHILKVMDEAISGAREEISEFAPRIHTMKISSDKIKDVIGKGGAVIRALCEETGTTIEIEDDGTIKIAATEGAAAKEAIRRIEEITAEVEVGKIYTGKVMRIVDFGAFVTVLGPKEGLVHISQIAEERIEKVADHLQVGQEVKTKVLEIDRQGRIRLSIKEANAELNPAPAAEAKDAE.

Mg(2+) is bound by residues Asp487 and Asp493. A KH domain is found at 554-613 (PRIHTMKISSDKIKDVIGKGGAVIRALCEETGTTIEIEDDGTIKIAATEGAAAKEAIRRI). The S1 motif domain occupies 623–691 (GKIYTGKVMR…RQGRIRLSIK (69 aa)).

This sequence belongs to the polyribonucleotide nucleotidyltransferase family. Component of the RNA degradosome, which is a multiprotein complex involved in RNA processing and mRNA degradation. The cofactor is Mg(2+).

It is found in the cytoplasm. It catalyses the reaction RNA(n+1) + phosphate = RNA(n) + a ribonucleoside 5'-diphosphate. Its function is as follows. Involved in mRNA degradation. Catalyzes the phosphorolysis of single-stranded polyribonucleotides processively in the 3'- to 5'-direction. The sequence is that of Polyribonucleotide nucleotidyltransferase from Aliivibrio fischeri (strain ATCC 700601 / ES114) (Vibrio fischeri).